The primary structure comprises 1293 residues: Phosphoribosylformylglycinamidine synthase (1293 aa).

Residues 305 to 316 (GAATGSGGEIRD) and A676 contribute to the ATP site. D677, E716, N720, and D884 together coordinate Mg(2+). S886 provides a ligand contact to ATP. The 254-residue stretch at 1040 to 1293 (MAILREQGVN…MFRNARVKLG (254 aa)) folds into the Glutamine amidotransferase type-1 domain. C1133 functions as the Nucleophile in the catalytic mechanism. Residues H1258 and E1260 contribute to the active site.

The protein in the N-terminal section; belongs to the FGAMS family. As to quaternary structure, monomer.

It localises to the cytoplasm. It catalyses the reaction N(2)-formyl-N(1)-(5-phospho-beta-D-ribosyl)glycinamide + L-glutamine + ATP + H2O = 2-formamido-N(1)-(5-O-phospho-beta-D-ribosyl)acetamidine + L-glutamate + ADP + phosphate + H(+). It participates in purine metabolism; IMP biosynthesis via de novo pathway; 5-amino-1-(5-phospho-D-ribosyl)imidazole from N(2)-formyl-N(1)-(5-phospho-D-ribosyl)glycinamide: step 1/2. Functionally, phosphoribosylformylglycinamidine synthase involved in the purines biosynthetic pathway. Catalyzes the ATP-dependent conversion of formylglycinamide ribonucleotide (FGAR) and glutamine to yield formylglycinamidine ribonucleotide (FGAM) and glutamate. This chain is Phosphoribosylformylglycinamidine synthase, found in Shewanella denitrificans (strain OS217 / ATCC BAA-1090 / DSM 15013).